Consider the following 96-residue polypeptide: Small ribosomal subunit protein bS6 (96 aa).

It belongs to the bacterial ribosomal protein bS6 family.

Binds together with bS18 to 16S ribosomal RNA. This Streptococcus equi subsp. zooepidemicus (strain MGCS10565) protein is Small ribosomal subunit protein bS6.